A 292-amino-acid chain; its full sequence is Quinolinate synthase (292 aa).

The iminosuccinate site is built by H8 and S25. C70 contributes to the [4Fe-4S] cluster binding site. Iminosuccinate-binding positions include 96–98 (YVN) and S113. Residue C158 participates in [4Fe-4S] cluster binding. Iminosuccinate is bound by residues 184-186 (HPE) and T201. [4Fe-4S] cluster is bound at residue C244.

This sequence belongs to the quinolinate synthase family. Type 2 subfamily. The cofactor is [4Fe-4S] cluster.

Its subcellular location is the cytoplasm. It carries out the reaction iminosuccinate + dihydroxyacetone phosphate = quinolinate + phosphate + 2 H2O + H(+). Its pathway is cofactor biosynthesis; NAD(+) biosynthesis; quinolinate from iminoaspartate: step 1/1. Functionally, catalyzes the condensation of iminoaspartate with dihydroxyacetone phosphate to form quinolinate. This is Quinolinate synthase (nadA) from Methanopyrus kandleri (strain AV19 / DSM 6324 / JCM 9639 / NBRC 100938).